The chain runs to 644 residues: DNA mismatch repair protein MutL (644 aa).

A compositionally biased stretch (basic and acidic residues) spans 340–360 (KKEKDESVQEQFKFEHTKPRE). The segment at 340–425 (KKEKDESVQE…ETVREEKEWT (86 aa)) is disordered. Low complexity predominate over residues 387–400 (QLWQPPKQEWQPPQ). The segment covering 416-425 (ETVREEKEWT) has biased composition (basic and acidic residues).

Belongs to the DNA mismatch repair MutL/HexB family.

In terms of biological role, this protein is involved in the repair of mismatches in DNA. It is required for dam-dependent methyl-directed DNA mismatch repair. May act as a 'molecular matchmaker', a protein that promotes the formation of a stable complex between two or more DNA-binding proteins in an ATP-dependent manner without itself being part of a final effector complex. This is DNA mismatch repair protein MutL from Bacillus mycoides (strain KBAB4) (Bacillus weihenstephanensis).